We begin with the raw amino-acid sequence, 318 residues long: tRNA(Ile)-lysidine synthase (318 aa).

Serine 26–serine 31 serves as a coordination point for ATP.

This sequence belongs to the tRNA(Ile)-lysidine synthase family.

Its subcellular location is the cytoplasm. The catalysed reaction is cytidine(34) in tRNA(Ile2) + L-lysine + ATP = lysidine(34) in tRNA(Ile2) + AMP + diphosphate + H(+). Ligates lysine onto the cytidine present at position 34 of the AUA codon-specific tRNA(Ile) that contains the anticodon CAU, in an ATP-dependent manner. Cytidine is converted to lysidine, thus changing the amino acid specificity of the tRNA from methionine to isoleucine. This chain is tRNA(Ile)-lysidine synthase, found in Nocardia farcinica (strain IFM 10152).